The chain runs to 353 residues: Uroporphyrinogen decarboxylase (353 aa).

Residues arginine 25–arginine 29, aspartate 74, tyrosine 151, serine 206, and histidine 325 contribute to the substrate site.

This sequence belongs to the uroporphyrinogen decarboxylase family. Homodimer.

Its subcellular location is the cytoplasm. It carries out the reaction uroporphyrinogen III + 4 H(+) = coproporphyrinogen III + 4 CO2. The protein operates within porphyrin-containing compound metabolism; protoporphyrin-IX biosynthesis; coproporphyrinogen-III from 5-aminolevulinate: step 4/4. Functionally, catalyzes the decarboxylation of four acetate groups of uroporphyrinogen-III to yield coproporphyrinogen-III. This is Uroporphyrinogen decarboxylase from Chloroherpeton thalassium (strain ATCC 35110 / GB-78).